We begin with the raw amino-acid sequence, 69 residues long: IEVVMGGKEGYLLDKSNGCKRSCFFGSTSWCNTECKSKSAEKGYCAWPSCYCYGFSDDSKMWDLKTNKC.

The N-terminal stretch at 1–7 is a signal peptide; it reads IEVVMGG. Positions 8-69 constitute an LCN-type CS-alpha/beta domain; that stretch reads KEGYLLDKSN…KMWDLKTNKC (62 aa). 4 disulfide bridges follow: Cys19–Cys69, Cys23–Cys45, Cys31–Cys50, and Cys35–Cys52.

It belongs to the long (4 C-C) scorpion toxin superfamily. Sodium channel inhibitor family. Beta subfamily. In terms of tissue distribution, expressed by the venom gland.

The protein resides in the secreted. Its function is as follows. Beta toxins bind voltage-independently at site-4 of sodium channels (Nav) and shift the voltage of activation toward more negative potentials thereby affecting sodium channel activation and promoting spontaneous and repetitive firing. The chain is Toxin Tz2 from Tityus zulianus (Venezuelan scorpion).